The primary structure comprises 423 residues: Serine--tRNA ligase (423 aa).

229-231 serves as a coordination point for L-serine; the sequence is TAE. Position 260 to 262 (260 to 262) interacts with ATP; it reads RRE. Glu-283 contacts L-serine. ATP is bound at residue 347–350; the sequence is EISS. Ser-383 lines the L-serine pocket.

It belongs to the class-II aminoacyl-tRNA synthetase family. Type-1 seryl-tRNA synthetase subfamily. As to quaternary structure, homodimer. The tRNA molecule binds across the dimer.

The protein localises to the cytoplasm. The catalysed reaction is tRNA(Ser) + L-serine + ATP = L-seryl-tRNA(Ser) + AMP + diphosphate + H(+). It catalyses the reaction tRNA(Sec) + L-serine + ATP = L-seryl-tRNA(Sec) + AMP + diphosphate + H(+). The protein operates within aminoacyl-tRNA biosynthesis; selenocysteinyl-tRNA(Sec) biosynthesis; L-seryl-tRNA(Sec) from L-serine and tRNA(Sec): step 1/1. Catalyzes the attachment of serine to tRNA(Ser). Is also able to aminoacylate tRNA(Sec) with serine, to form the misacylated tRNA L-seryl-tRNA(Sec), which will be further converted into selenocysteinyl-tRNA(Sec). The protein is Serine--tRNA ligase of Trichlorobacter lovleyi (strain ATCC BAA-1151 / DSM 17278 / SZ) (Geobacter lovleyi).